The chain runs to 66 residues: Large ribosomal subunit protein bL35 (66 aa).

The disordered stretch occupies residues 1–26 (MPKQKTHRGAAKRFKKTGSGKLKRSH).

This sequence belongs to the bacterial ribosomal protein bL35 family.

This Bacillus anthracis protein is Large ribosomal subunit protein bL35.